Consider the following 399-residue polypeptide: Tryptophan synthase beta chain (399 aa).

Lysine 91 carries the post-translational modification N6-(pyridoxal phosphate)lysine.

The protein belongs to the TrpB family. In terms of assembly, tetramer of two alpha and two beta chains. Pyridoxal 5'-phosphate serves as cofactor.

It catalyses the reaction (1S,2R)-1-C-(indol-3-yl)glycerol 3-phosphate + L-serine = D-glyceraldehyde 3-phosphate + L-tryptophan + H2O. It participates in amino-acid biosynthesis; L-tryptophan biosynthesis; L-tryptophan from chorismate: step 5/5. Functionally, the beta subunit is responsible for the synthesis of L-tryptophan from indole and L-serine. The chain is Tryptophan synthase beta chain from Shouchella clausii (strain KSM-K16) (Alkalihalobacillus clausii).